Reading from the N-terminus, the 202-residue chain is Nucleoid occlusion factor SlmA (202 aa).

In terms of domain architecture, HTH tetR-type spans 14–75; that stretch reads KERQQQVLEV…ALIERIEQTL (62 aa). Residues 38 to 57 constitute a DNA-binding region (H-T-H motif); that stretch reads TTERLAKAVGVSEGALYRYF.

Belongs to the nucleoid occlusion factor SlmA family. In terms of assembly, homodimer. Interacts with FtsZ.

The protein localises to the cytoplasm. It localises to the nucleoid. In terms of biological role, required for nucleoid occlusion (NO) phenomenon, which prevents Z-ring formation and cell division over the nucleoid. Acts as a DNA-associated cell division inhibitor that binds simultaneously chromosomal DNA and FtsZ, and disrupts the assembly of FtsZ polymers. SlmA-DNA-binding sequences (SBS) are dispersed on non-Ter regions of the chromosome, preventing FtsZ polymerization at these regions. In Haemophilus ducreyi (strain 35000HP / ATCC 700724), this protein is Nucleoid occlusion factor SlmA.